Consider the following 366-residue polypeptide: Quinolinate synthase (366 aa).

Iminosuccinate contacts are provided by His-44 and Ser-61. [4Fe-4S] cluster is bound at residue Cys-108. Iminosuccinate is bound by residues 139–141 (YIN) and Ser-160. Cys-228 contacts [4Fe-4S] cluster. Iminosuccinate is bound by residues 254-256 (HPE) and Thr-271. [4Fe-4S] cluster is bound at residue Cys-318.

The protein belongs to the quinolinate synthase family. Type 3 subfamily. It depends on [4Fe-4S] cluster as a cofactor.

The protein localises to the cytoplasm. It carries out the reaction iminosuccinate + dihydroxyacetone phosphate = quinolinate + phosphate + 2 H2O + H(+). The protein operates within cofactor biosynthesis; NAD(+) biosynthesis; quinolinate from iminoaspartate: step 1/1. Functionally, catalyzes the condensation of iminoaspartate with dihydroxyacetone phosphate to form quinolinate. The protein is Quinolinate synthase of Listeria monocytogenes serovar 1/2a (strain ATCC BAA-679 / EGD-e).